Reading from the N-terminus, the 210-residue chain is FMN-dependent NADH:quinone oxidoreductase (210 aa).

Residues 17–19 and 148–151 each bind FMN; these read SCS and SSGG.

It belongs to the azoreductase type 1 family. In terms of assembly, homodimer. It depends on FMN as a cofactor.

The enzyme catalyses 2 a quinone + NADH + H(+) = 2 a 1,4-benzosemiquinone + NAD(+). The catalysed reaction is N,N-dimethyl-1,4-phenylenediamine + anthranilate + 2 NAD(+) = 2-(4-dimethylaminophenyl)diazenylbenzoate + 2 NADH + 2 H(+). Its function is as follows. Quinone reductase that provides resistance to thiol-specific stress caused by electrophilic quinones. Functionally, also exhibits azoreductase activity. Catalyzes the reductive cleavage of the azo bond in aromatic azo compounds to the corresponding amines. In Geotalea uraniireducens (strain Rf4) (Geobacter uraniireducens), this protein is FMN-dependent NADH:quinone oxidoreductase.